The following is a 237-amino-acid chain: MVTHGKKYQDAIKLLDQSVAYAPAEAIDLAKKMSAAKFDETVEMHLKMGLDPKNATQQLRGVAVLPHGLGKTVRVLVFAQGEAEKAAQVAGADVYGGDELIKKIEAGFLDFDVAISTPDMMSKVGKLGKVLGRRGLMPNPKSGTVVPAEDFKKVIEEARKGRVEFKLDRSGIVHIILGKASFEGQMLLENMTSVVDAIIRSKPTGAKGQYIKSAYLATTMGPGVRLDLRAVSAMGGV.

It belongs to the universal ribosomal protein uL1 family. Part of the 50S ribosomal subunit.

Binds directly to 23S rRNA. The L1 stalk is quite mobile in the ribosome, and is involved in E site tRNA release. Its function is as follows. Protein L1 is also a translational repressor protein, it controls the translation of the L11 operon by binding to its mRNA. The sequence is that of Large ribosomal subunit protein uL1 from Dehalococcoides mccartyi (strain CBDB1).